Reading from the N-terminus, the 461-residue chain is Arginine biosynthesis bifunctional protein ArgJ, chloroplastic (461 aa).

Residues Thr-202, Lys-228, Thr-239, Glu-326, Asn-456, and Thr-461 each contribute to the substrate site. Thr-239 (nucleophile) is an active-site residue.

It belongs to the ArgJ family. As to quaternary structure, heterodimer of an alpha and a beta chain.

The protein localises to the plastid. The protein resides in the chloroplast. The enzyme catalyses N(2)-acetyl-L-ornithine + L-glutamate = N-acetyl-L-glutamate + L-ornithine. The catalysed reaction is L-glutamate + acetyl-CoA = N-acetyl-L-glutamate + CoA + H(+). It functions in the pathway amino-acid biosynthesis; L-arginine biosynthesis; L-ornithine and N-acetyl-L-glutamate from L-glutamate and N(2)-acetyl-L-ornithine (cyclic): step 1/1. Its pathway is amino-acid biosynthesis; L-arginine biosynthesis; N(2)-acetyl-L-ornithine from L-glutamate: step 1/4. In terms of biological role, catalyzes two activities which are involved in the cyclic version of arginine biosynthesis: the synthesis of acetylglutamate from glutamate and acetyl-CoA, and of ornithine by transacetylation between acetylornithine and glutamate. This is Arginine biosynthesis bifunctional protein ArgJ, chloroplastic from Ostreococcus lucimarinus (strain CCE9901).